The sequence spans 190 residues: Putative manganese efflux pump MntP (190 aa).

6 consecutive transmembrane segments (helical) span residues 6 to 26 (IWLLAISLAMDCFTVSITSGI), 36 to 56 (FFIMAFFFGLFQAVMPLIGWF), 61 to 81 (FSHLIEDYDHWIAFGLLAFWG), 108 to 128 (LAIATSIDALAIGISFAFVGI), 138 to 158 (IVIIGFTSFVISTLGSLIGVF), and 169 to 189 (LWGGLVLIIIGVKILIEHLFL).

It belongs to the MntP (TC 9.B.29) family.

The protein resides in the cell inner membrane. Probably functions as a manganese efflux pump. The chain is Putative manganese efflux pump MntP from Phocaeicola vulgatus (strain ATCC 8482 / DSM 1447 / JCM 5826 / CCUG 4940 / NBRC 14291 / NCTC 11154) (Bacteroides vulgatus).